The sequence spans 170 residues: Ureidoglycolate lyase 1 (170 aa).

The protein belongs to the ureidoglycolate lyase family. Homodimer. It depends on Ni(2+) as a cofactor.

It catalyses the reaction (S)-ureidoglycolate = urea + glyoxylate. It participates in nitrogen metabolism; (S)-allantoin degradation. In terms of biological role, catalyzes the catabolism of the allantoin degradation intermediate (S)-ureidoglycolate, generating urea and glyoxylate. Involved in the utilization of allantoin as nitrogen source. This Rhizobium meliloti (strain 1021) (Ensifer meliloti) protein is Ureidoglycolate lyase 1.